Reading from the N-terminus, the 443-residue chain is UDP-N-acetylmuramate--L-alanine ligase (443 aa).

110–116 lines the ATP pocket; that stretch reads GAHGKTS.

Belongs to the MurCDEF family.

The protein localises to the cytoplasm. The catalysed reaction is UDP-N-acetyl-alpha-D-muramate + L-alanine + ATP = UDP-N-acetyl-alpha-D-muramoyl-L-alanine + ADP + phosphate + H(+). Its pathway is cell wall biogenesis; peptidoglycan biosynthesis. Its function is as follows. Cell wall formation. This chain is UDP-N-acetylmuramate--L-alanine ligase, found in Streptococcus gordonii (strain Challis / ATCC 35105 / BCRC 15272 / CH1 / DL1 / V288).